Reading from the N-terminus, the 412-residue chain is Divalent metal cation transporter MntH (412 aa).

11 consecutive transmembrane segments (helical) span residues 19–39, 46–66, 94–114, 122–142, 156–176, 196–216, 241–261, 290–310, 329–349, 350–370, and 389–409; these read LALM…GNFA, ASFG…AMLI, VWFY…AEFI, LILG…TFLI, VIGG…IFSQ, AVFL…IYLH, IAMT…AAAF, VFGL…TLAG, TITM…TRIL, VMSQ…LLIF, and IGWM…VGTA.

The protein belongs to the NRAMP family.

It is found in the cell inner membrane. Its function is as follows. H(+)-stimulated, divalent metal cation uptake system. The protein is Divalent metal cation transporter MntH of Citrobacter koseri (strain ATCC BAA-895 / CDC 4225-83 / SGSC4696).